A 92-amino-acid polypeptide reads, in one-letter code: UPF0237 protein MM_0082 (92 aa).

Residues 7–81 (IITVIGSDRV…KSLGVEVKVQ (75 aa)) enclose the ACT domain.

It belongs to the UPF0237 family.

The chain is UPF0237 protein MM_0082 from Methanosarcina mazei (strain ATCC BAA-159 / DSM 3647 / Goe1 / Go1 / JCM 11833 / OCM 88) (Methanosarcina frisia).